Here is a 137-residue protein sequence, read N- to C-terminus: Large ribosomal subunit protein uL16 (137 aa).

Belongs to the universal ribosomal protein uL16 family. As to quaternary structure, part of the 50S ribosomal subunit.

Its function is as follows. Binds 23S rRNA and is also seen to make contacts with the A and possibly P site tRNAs. This Ruegeria sp. (strain TM1040) (Silicibacter sp.) protein is Large ribosomal subunit protein uL16.